Consider the following 334-residue polypeptide: N-acetyl-gamma-glutamyl-phosphate reductase (334 aa).

The active site involves Cys-154.

The protein belongs to the NAGSA dehydrogenase family. Type 1 subfamily.

It is found in the cytoplasm. The catalysed reaction is N-acetyl-L-glutamate 5-semialdehyde + phosphate + NADP(+) = N-acetyl-L-glutamyl 5-phosphate + NADPH + H(+). It participates in amino-acid biosynthesis; L-arginine biosynthesis; N(2)-acetyl-L-ornithine from L-glutamate: step 3/4. In terms of biological role, catalyzes the NADPH-dependent reduction of N-acetyl-5-glutamyl phosphate to yield N-acetyl-L-glutamate 5-semialdehyde. This Salmonella typhimurium (strain LT2 / SGSC1412 / ATCC 700720) protein is N-acetyl-gamma-glutamyl-phosphate reductase.